We begin with the raw amino-acid sequence, 351 residues long: Dihydroorotate dehydrogenase (quinone) (351 aa).

Residues alanine 61–lysine 65 and threonine 85 each bind FMN. Position 65 (lysine 65) interacts with substrate. Residue asparagine 110 to phenylalanine 114 coordinates substrate. The FMN site is built by asparagine 139 and asparagine 172. Asparagine 172 is a binding site for substrate. Serine 175 acts as the Nucleophile in catalysis. Asparagine 177 contributes to the substrate binding site. FMN-binding residues include lysine 217 and threonine 245. Asparagine 246–threonine 247 contacts substrate. FMN contacts are provided by residues glycine 268, glycine 297, and tyrosine 318–threonine 319.

It belongs to the dihydroorotate dehydrogenase family. Type 2 subfamily. In terms of assembly, monomer. The cofactor is FMN.

It localises to the cell membrane. It carries out the reaction (S)-dihydroorotate + a quinone = orotate + a quinol. It participates in pyrimidine metabolism; UMP biosynthesis via de novo pathway; orotate from (S)-dihydroorotate (quinone route): step 1/1. In terms of biological role, catalyzes the conversion of dihydroorotate to orotate with quinone as electron acceptor. The protein is Dihydroorotate dehydrogenase (quinone) of Xylella fastidiosa (strain M23).